A 119-amino-acid polypeptide reads, in one-letter code: Ribonuclease (119 aa).

K6 and R9 together coordinate substrate. Residue H11 is the Proton acceptor of the active site. 3 cysteine pairs are disulfide-bonded: C26–C81, C40–C92, and C58–C107. Residues 41-45 (KFTNT) and R82 each bind substrate. The active-site Proton donor is H114.

Belongs to the pancreatic ribonuclease family. In terms of assembly, monomer. Interacts with and forms tight 1:1 complexes with RNH1. Dimerization of two such complexes may occur. Interaction with RNH1 inhibits this protein.

The protein localises to the secreted. The catalysed reaction is an [RNA] containing cytidine + H2O = an [RNA]-3'-cytidine-3'-phosphate + a 5'-hydroxy-ribonucleotide-3'-[RNA].. The enzyme catalyses an [RNA] containing uridine + H2O = an [RNA]-3'-uridine-3'-phosphate + a 5'-hydroxy-ribonucleotide-3'-[RNA].. In terms of biological role, endonuclease that catalyzes the cleavage of RNA on the 3' side of pyrimidine nucleotides. Acts on single-stranded and double-stranded RNA. This is Ribonuclease from Chelonia mydas (Green sea-turtle).